A 326-amino-acid chain; its full sequence is MFISISAGIVTFLLTLVGIPAFIQFYRKAQITGQQMHEDVKQHQAKAGTPTMGGLVFLIAAVVVSFLVALFSKQLTNNVGMILFILVLYGLVGFLDDFLKVFRKINEGLNPKQKLALQLLGGVIFYLFYERGGDMLSVFGYQVHLGIFYIIFALFWLVGFSNAVNLTDGIDGLASISVVISLSAYGVIAYVQGQMDILLVIFAMIGGLLGFFVFNHKPAKVFMGDVGSLALGGMLAAISMALHQEWTLLIIGIVYVFETTSVMMQVSYFKLTGGKRIFRMTPVHHHFELGGLSGKGNPWSEWKVDFFFWGVGLLASLLTFAILYLM.

9 helical membrane passes run 3–23, 51–71, 79–99, 115–135, 138–158, 169–189, 195–215, 221–243, and 306–326; these read ISISAGIVTFLLTLVGIPAFI, TMGGLVFLIAAVVVSFLVALF, VGMILFILVLYGLVGFLDDFL, LALQLLGGVIFYLFYERGGDM, VFGYQVHLGIFYIIFALFWLV, GIDGLASISVVISLSAYGVIA, MDILLVIFAMIGGLLGFFVFN, VFMGDVGSLALGGMLAAISMALH, and FFFWGVGLLASLLTFAILYLM.

Belongs to the glycosyltransferase 4 family. MraY subfamily. Requires Mg(2+) as cofactor.

Its subcellular location is the cell membrane. The catalysed reaction is UDP-N-acetyl-alpha-D-muramoyl-L-alanyl-gamma-D-glutamyl-L-lysyl-D-alanyl-D-alanine + di-trans,octa-cis-undecaprenyl phosphate = Mur2Ac(oyl-L-Ala-gamma-D-Glu-L-Lys-D-Ala-D-Ala)-di-trans,octa-cis-undecaprenyl diphosphate + UMP. It functions in the pathway cell wall biogenesis; peptidoglycan biosynthesis. In terms of biological role, catalyzes the initial step of the lipid cycle reactions in the biosynthesis of the cell wall peptidoglycan: transfers peptidoglycan precursor phospho-MurNAc-pentapeptide from UDP-MurNAc-pentapeptide onto the lipid carrier undecaprenyl phosphate, yielding undecaprenyl-pyrophosphoryl-MurNAc-pentapeptide, known as lipid I. The protein is Phospho-N-acetylmuramoyl-pentapeptide-transferase of Streptococcus pneumoniae (strain Taiwan19F-14).